The primary structure comprises 162 residues: General odorant-binding protein 2 (162 aa).

The first 18 residues, 1 to 18, serve as a signal peptide directing secretion; that stretch reads MTSKSCLLLVAMVTLTTS. 3 cysteine pairs are disulfide-bonded: Cys40–Cys75, Cys71–Cys129, and Cys118–Cys138.

It belongs to the PBP/GOBP family. In terms of tissue distribution, antenna.

Its function is as follows. Present in the aqueous fluid surrounding olfactory sensory dendrites and are thought to aid in the capture and transport of hydrophobic odorants into and through this fluid. The protein is General odorant-binding protein 2 of Heliothis virescens (Tobacco budworm moth).